Consider the following 984-residue polypeptide: E3 ubiquitin-protein ligase BRE1A (984 aa).

Residues 1–34 (MSGAGNKRAAGEPGPSAPPEKKAGVEDSGTTVET) form a disordered region. The stretch at 43–90 (TEELDIRTLQTKNRKLAEMLDQRQAIEDELREHIEKLERRQATDDASL) forms a coiled coil. The disordered stretch occupies residues 128–150 (VVPEPEPDSDSNQERKDERERGE). Residues 139–150 (NQERKDERERGE) show a composition bias toward basic and acidic residues. Coiled-coil stretches lie at residues 236 to 378 (ADTL…VKET) and 429 to 907 (SLHK…TTKK). Residues 506–632 (SDLSKIRSRS…KHEDGRKKEA (127 aa)) are disordered. Over residues 514–526 (RSGSALLQSQSST) the composition is skewed to polar residues. Basic and acidic residues-rich tracts occupy residues 527–540 (EDTKEEPPEIKQEP) and 558–632 (SEVK…KKEA). The RING-type zinc-finger motif lies at 931–970 (CPCCNMRKKDAVLTKCFHVFCFECVKTRYDTRQRKCPKCN).

It belongs to the BRE1 family. Component of the RNF20/40 complex (also known as BRE1 complex).

It localises to the nucleus. It catalyses the reaction S-ubiquitinyl-[E2 ubiquitin-conjugating enzyme]-L-cysteine + [acceptor protein]-L-lysine = [E2 ubiquitin-conjugating enzyme]-L-cysteine + N(6)-ubiquitinyl-[acceptor protein]-L-lysine.. It participates in protein modification; protein ubiquitination. In terms of biological role, component of the RNF20/40 E3 ubiquitin-protein ligase complex that mediates monoubiquitination of 'Lys-120' of histone H2B (H2BK120ub1). H2BK120ub1 gives a specific tag for epigenetic transcriptional activation and is also prerequisite for histone H3 'Lys-4' and 'Lys-79' methylation (H3K4me and H3K79me, respectively). In Gallus gallus (Chicken), this protein is E3 ubiquitin-protein ligase BRE1A (RNF20).